A 419-amino-acid polypeptide reads, in one-letter code: uncharacterized protein (419 aa).

Transmembrane regions (helical) follow at residues 1-21 (MTTV…FLIL), 24-44 (VSPA…GGAD), 66-86 (ILAA…NSIT), 101-121 (ALAL…VAVI), 174-194 (SVMM…YFLA), 216-236 (NLPS…LLAL), 242-262 (IKVD…FCMG), 280-300 (PVAI…NSGL), 311-331 (SGLP…LATA), 349-369 (LELG…ATVF), and 396-416 (IPYE…IFGV).

Belongs to the CitM (TC 2.A.11) transporter family.

The protein localises to the cell membrane. This is an uncharacterized protein from Haemophilus influenzae (strain ATCC 51907 / DSM 11121 / KW20 / Rd).